Consider the following 304-residue polypeptide: Granaticin polyketide synthase bifunctional cyclase/dehydratase (304 aa).

It functions in the pathway antifungal biosynthesis; monensin biosynthesis. Functionally, is needed for correct cyclization of the oligoketide leading to isochromanequinone formation. This is Granaticin polyketide synthase bifunctional cyclase/dehydratase from Streptomyces virginiae (Streptomyces cinnamonensis).